We begin with the raw amino-acid sequence, 483 residues long: Altronate oxidoreductase (483 aa).

18 to 29 (IIQFGEGNFLRA) serves as a coordination point for NAD(+).

The protein belongs to the mannitol dehydrogenase family. UxaB subfamily.

The enzyme catalyses D-altronate + NAD(+) = keto-D-tagaturonate + NADH + H(+). Its pathway is carbohydrate metabolism; pentose and glucuronate interconversion. This chain is Altronate oxidoreductase, found in Cronobacter sakazakii (strain ATCC BAA-894) (Enterobacter sakazakii).